Consider the following 886-residue polypeptide: Microsomal triglyceride transfer protein (886 aa).

The N-terminal stretch at 1–24 is a signal peptide; that stretch reads MLRLAGLLLCVTSFLSTSSLGANA. In terms of domain architecture, Vitellogenin spans 28-662; sequence LDNDRLYRYS…QSNNALLHGL (635 aa). 2 disulfides stabilise this stretch: C174–C194 and C440–C445.

As to quaternary structure, heterodimer; heterodimerizes with the protein disulfide isomerase. Interacts with apolipoprotein B.

Its subcellular location is the endoplasmic reticulum. Functionally, catalyzes the transport of triglyceride, cholesteryl ester, and phospholipid between phospholipid surfaces. Required for the secretion of plasma lipoproteins that contain apolipoprotein B. In Megalobrama amblycephala (Chinese blunt snout bream), this protein is Microsomal triglyceride transfer protein.